A 537-amino-acid chain; its full sequence is Ceramide kinase (537 aa).

The segment at 1 to 115 (MGATGAAEPL…CPEEQLCHLW (115 aa)) is essential for enzyme activity. The segment at 1–125 (MGATGAAEPL…LQTLREMLEK (125 aa)) is required for binding to sulfatide and phosphoinositides. In terms of domain architecture, DAGKc spans 128 to 278 (SRPKHLLVFI…MDVSSVHHNS (151 aa)). Residues 138–140 (NPF) and 170–174 (TEHAN) each bind ATP. Position 195–198 (195–198 (GGDG)) interacts with substrate. The Proton donor/acceptor role is filled by D197. ATP contacts are provided by residues E202, 239-241 (GST), R304, and R310. Phosphoserine is present on residues S340 and S408. 502–504 (DGE) serves as a coordination point for ATP.

Ca(2+) is required as a cofactor. Requires Mg(2+) as cofactor. As to expression, high level expression in heart, brain, skeletal muscle, kidney and liver; moderate in peripheral blood leukocytes and thymus; very low in spleen, small intestine, placenta and lung.

The protein localises to the cytoplasm. The protein resides in the cell membrane. It catalyses the reaction an N-acylsphing-4-enine + ATP = an N-acylsphing-4-enine 1-phosphate + ADP + H(+). It carries out the reaction N-(hexanoyl)sphing-4-enine + ATP = N-hexanoylsphing-4-enine 1-phosphate + ADP + H(+). The enzyme catalyses N-(acetyl)-sphing-4-enine + ATP = N-(acetyl)-sphing-4-enine-1-phosphate + ADP + H(+). The catalysed reaction is N-hexadecanoylsphing-4-enine + ATP = N-(hexadecanoyl)-sphing-4-enine-1-phosphate + ADP + H(+). It catalyses the reaction N-hexanoyl-(4R)-hydroxysphinganine + ATP = N-hexanoyl-(4R)-hydroxysphinganine-1-phosphate + ADP + H(+). Its activity is regulated as follows. Inhibited by sulfatide. Inhibited by sphinganine, sphingenine, and N,N-Dimethylsphingosine (DMS). Cardiolipin at 0.1 uM significantly increases activity, whereas at concentrations &gt;1 uM has an inhibitory effect. Catalyzes specifically the phosphorylation of ceramide to form ceramide 1-phosphate. Acts efficiently on natural and analog ceramides (C6, C8, C16 ceramides, and C8-dihydroceramide), to a lesser extent on C2-ceramide and C6-dihydroceramide, but not on other lipids, such as various sphingosines. Shows a greater preference for D-erythro isomer of ceramides. Binds phosphoinositides. This chain is Ceramide kinase (CERK), found in Homo sapiens (Human).